The chain runs to 232 residues: Ubiquinone biosynthesis O-methyltransferase (232 aa).

S-adenosyl-L-methionine contacts are provided by R36, G55, D76, and L120.

Belongs to the methyltransferase superfamily. UbiG/COQ3 family.

The catalysed reaction is a 3-demethylubiquinol + S-adenosyl-L-methionine = a ubiquinol + S-adenosyl-L-homocysteine + H(+). It carries out the reaction a 3-(all-trans-polyprenyl)benzene-1,2-diol + S-adenosyl-L-methionine = a 2-methoxy-6-(all-trans-polyprenyl)phenol + S-adenosyl-L-homocysteine + H(+). Its pathway is cofactor biosynthesis; ubiquinone biosynthesis. In terms of biological role, O-methyltransferase that catalyzes the 2 O-methylation steps in the ubiquinone biosynthetic pathway. The polypeptide is Ubiquinone biosynthesis O-methyltransferase (Pseudomonas aeruginosa (strain ATCC 15692 / DSM 22644 / CIP 104116 / JCM 14847 / LMG 12228 / 1C / PRS 101 / PAO1)).